The primary structure comprises 660 residues: Bifunctional polymyxin resistance protein ArnA (660 aa).

The segment at 1–304 is formyltransferase ArnAFT; that stretch reads MKTVVFAYHD…TLGLVQGSRL (304 aa). Residue 86–88 participates in (6R)-10-formyltetrahydrofolate binding; it reads HLI. Residue histidine 104 is the Proton donor; for formyltransferase activity of the active site. (6R)-10-formyltetrahydrofolate is bound by residues arginine 114 and 136–140; that span reads VTRAD. The interval 314-660 is dehydrogenase ArnADH; the sequence is RRTRVLILGV…RTVDLTDKPS (347 aa). NAD(+) contacts are provided by residues aspartate 347 and 368-369; that span reads DI. UDP-alpha-D-glucuronate-binding positions include alanine 393, tyrosine 398, and 432-433; that span reads TS. The active-site Proton acceptor; for decarboxylase activity is the glutamate 434. UDP-alpha-D-glucuronate is bound by residues arginine 460, asparagine 492, 526-535, and tyrosine 613; that span reads KLIDGGKQKR. The active-site Proton donor; for decarboxylase activity is the arginine 619.

It in the N-terminal section; belongs to the Fmt family. UDP-L-Ara4N formyltransferase subfamily. This sequence in the C-terminal section; belongs to the NAD(P)-dependent epimerase/dehydratase family. UDP-glucuronic acid decarboxylase subfamily. Homohexamer, formed by a dimer of trimers.

The enzyme catalyses UDP-alpha-D-glucuronate + NAD(+) = UDP-beta-L-threo-pentopyranos-4-ulose + CO2 + NADH. It catalyses the reaction UDP-4-amino-4-deoxy-beta-L-arabinose + (6R)-10-formyltetrahydrofolate = UDP-4-deoxy-4-formamido-beta-L-arabinose + (6S)-5,6,7,8-tetrahydrofolate + H(+). It participates in nucleotide-sugar biosynthesis; UDP-4-deoxy-4-formamido-beta-L-arabinose biosynthesis; UDP-4-deoxy-4-formamido-beta-L-arabinose from UDP-alpha-D-glucuronate: step 1/3. Its pathway is nucleotide-sugar biosynthesis; UDP-4-deoxy-4-formamido-beta-L-arabinose biosynthesis; UDP-4-deoxy-4-formamido-beta-L-arabinose from UDP-alpha-D-glucuronate: step 3/3. The protein operates within bacterial outer membrane biogenesis; lipopolysaccharide biosynthesis. Functionally, bifunctional enzyme that catalyzes the oxidative decarboxylation of UDP-glucuronic acid (UDP-GlcUA) to UDP-4-keto-arabinose (UDP-Ara4O) and the addition of a formyl group to UDP-4-amino-4-deoxy-L-arabinose (UDP-L-Ara4N) to form UDP-L-4-formamido-arabinose (UDP-L-Ara4FN). The modified arabinose is attached to lipid A and is required for resistance to polymyxin and cationic antimicrobial peptides. The chain is Bifunctional polymyxin resistance protein ArnA from Shigella dysenteriae serotype 1 (strain Sd197).